A 272-amino-acid chain; its full sequence is 3-methyl-2-oxobutanoate hydroxymethyltransferase (272 aa).

The Mg(2+) site is built by aspartate 52 and aspartate 91. 3-methyl-2-oxobutanoate contacts are provided by residues 52 to 53 (DS), aspartate 91, and lysine 121. Glutamate 123 lines the Mg(2+) pocket. The active-site Proton acceptor is glutamate 190.

This sequence belongs to the PanB family. In terms of assembly, homodecamer; pentamer of dimers. Mg(2+) serves as cofactor.

The protein resides in the cytoplasm. The enzyme catalyses 3-methyl-2-oxobutanoate + (6R)-5,10-methylene-5,6,7,8-tetrahydrofolate + H2O = 2-dehydropantoate + (6S)-5,6,7,8-tetrahydrofolate. It participates in cofactor biosynthesis; (R)-pantothenate biosynthesis; (R)-pantoate from 3-methyl-2-oxobutanoate: step 1/2. Its function is as follows. Catalyzes the reversible reaction in which hydroxymethyl group from 5,10-methylenetetrahydrofolate is transferred onto alpha-ketoisovalerate to form ketopantoate. The polypeptide is 3-methyl-2-oxobutanoate hydroxymethyltransferase (Flavobacterium johnsoniae (strain ATCC 17061 / DSM 2064 / JCM 8514 / BCRC 14874 / CCUG 350202 / NBRC 14942 / NCIMB 11054 / UW101) (Cytophaga johnsonae)).